The sequence spans 309 residues: Porphobilinogen deaminase (309 aa).

Cys-244 bears the S-(dipyrrolylmethanemethyl)cysteine mark.

Belongs to the HMBS family. Monomer. Dipyrromethane is required as a cofactor.

It carries out the reaction 4 porphobilinogen + H2O = hydroxymethylbilane + 4 NH4(+). The protein operates within porphyrin-containing compound metabolism; protoporphyrin-IX biosynthesis; coproporphyrinogen-III from 5-aminolevulinate: step 2/4. Its function is as follows. Tetrapolymerization of the monopyrrole PBG into the hydroxymethylbilane pre-uroporphyrinogen in several discrete steps. The sequence is that of Porphobilinogen deaminase from Listeria innocua serovar 6a (strain ATCC BAA-680 / CLIP 11262).